We begin with the raw amino-acid sequence, 182 residues long: Early nodulin-like protein 10 (182 aa).

The first 20 residues, 1–20 (MSSVMMCCCLLLLFGLLSEG), serve as a signal peptide directing secretion. The region spanning 21–125 (REILVGGKSN…GEKLRVVVLS (105 aa)) is the Phytocyanin domain. A glycan (N-linked (GlcNAc...) asparagine) is linked at Asn65. A disulfide bridge links Cys79 with Cys113. N-linked (GlcNAc...) asparagine glycosylation is found at Asn129 and Asn148. Asn157 is lipidated: GPI-anchor amidated asparagine. Residues 158-182 (AHIMNKGSLNTAWSLLLLLPLGLLV) constitute a propeptide, removed in mature form.

The protein belongs to the early nodulin-like (ENODL) family. Mostly expressed in flowers, and, to a lower extent, in leaves, but barely in seedlings, stems, seeds and roots.

The protein localises to the cell membrane. May act as a carbohydrate transporter. The protein is Early nodulin-like protein 10 of Arabidopsis thaliana (Mouse-ear cress).